We begin with the raw amino-acid sequence, 487 residues long: Zinc finger and BTB domain-containing protein 32 (487 aa).

Residues cysteine 29 to proline 87 form the BTB domain. Residues arginine 113–histidine 166 show a composition bias toward basic and acidic residues. 2 disordered regions span residues arginine 113 to lysine 208 and glutamine 308 to arginine 371. Residues glutamine 308 to serine 320 are compositionally biased toward polar residues. Pro residues predominate over residues proline 357–arginine 369. 3 consecutive C2H2-type zinc fingers follow at residues tyrosine 373–histidine 395, phenylalanine 401–histidine 423, and tyrosine 428–histidine 450. The disordered stretch occupies residues serine 468–threonine 487.

It belongs to the krueppel C2H2-type zinc-finger protein family. As to quaternary structure, homodimer (via PTB domain). Interacts with the N-terminal of FANCC. Interacts with ZBTB16. Interacts with GATA3.

The protein resides in the nucleus. DNA-binding protein that binds to the to a 5'-TGTACAGTGT-3' core sequence. May function as a transcriptional transactivator and transcriptional repressor. Probably exerts its repressor effect by preventing GATA3 from binding to DNA. May play a role in regulating the differentiation and activation of helper T-cells. The polypeptide is Zinc finger and BTB domain-containing protein 32 (ZBTB32) (Pan troglodytes (Chimpanzee)).